The chain runs to 503 residues: Probable cytosol aminopeptidase (503 aa).

Mn(2+)-binding residues include K268 and D273. K280 is a catalytic residue. Mn(2+) contacts are provided by D291, D350, and E352. R354 is a catalytic residue.

Belongs to the peptidase M17 family. Requires Mn(2+) as cofactor.

Its subcellular location is the cytoplasm. The enzyme catalyses Release of an N-terminal amino acid, Xaa-|-Yaa-, in which Xaa is preferably Leu, but may be other amino acids including Pro although not Arg or Lys, and Yaa may be Pro. Amino acid amides and methyl esters are also readily hydrolyzed, but rates on arylamides are exceedingly low.. It catalyses the reaction Release of an N-terminal amino acid, preferentially leucine, but not glutamic or aspartic acids.. In terms of biological role, presumably involved in the processing and regular turnover of intracellular proteins. Catalyzes the removal of unsubstituted N-terminal amino acids from various peptides. This Herminiimonas arsenicoxydans protein is Probable cytosol aminopeptidase.